A 364-amino-acid chain; its full sequence is Methylthioribose-1-phosphate isomerase (364 aa).

Asp-254 (proton donor) is an active-site residue.

Belongs to the eIF-2B alpha/beta/delta subunits family. MtnA subfamily.

It localises to the cytoplasm. It is found in the nucleus. The enzyme catalyses 5-(methylsulfanyl)-alpha-D-ribose 1-phosphate = 5-(methylsulfanyl)-D-ribulose 1-phosphate. It functions in the pathway amino-acid biosynthesis; L-methionine biosynthesis via salvage pathway; L-methionine from S-methyl-5-thio-alpha-D-ribose 1-phosphate: step 1/6. In terms of biological role, catalyzes the interconversion of methylthioribose-1-phosphate (MTR-1-P) into methylthioribulose-1-phosphate (MTRu-1-P). The polypeptide is Methylthioribose-1-phosphate isomerase (Drosophila ananassae (Fruit fly)).